Reading from the N-terminus, the 146-residue chain is Transcriptional regulator MraZ (146 aa).

2 SpoVT-AbrB domains span residues 9 to 55 (TSAL…PRPV) and 81 to 124 (AMDV…DAQR).

This sequence belongs to the MraZ family. In terms of assembly, forms oligomers.

The protein localises to the cytoplasm. It localises to the nucleoid. This chain is Transcriptional regulator MraZ, found in Leptothrix cholodnii (strain ATCC 51168 / LMG 8142 / SP-6) (Leptothrix discophora (strain SP-6)).